We begin with the raw amino-acid sequence, 85 residues long: Translation initiation factor IF-1 1 (85 aa).

In terms of domain architecture, S1-like spans 1–72 (MAKEELIEMS…SKGRITFRHL (72 aa)).

Belongs to the IF-1 family. Component of the 30S ribosomal translation pre-initiation complex which assembles on the 30S ribosome in the order IF-2 and IF-3, IF-1 and N-formylmethionyl-tRNA(fMet); mRNA recruitment can occur at any time during PIC assembly.

It is found in the cytoplasm. In terms of biological role, one of the essential components for the initiation of protein synthesis. Stabilizes the binding of IF-2 and IF-3 on the 30S subunit to which N-formylmethionyl-tRNA(fMet) subsequently binds. Helps modulate mRNA selection, yielding the 30S pre-initiation complex (PIC). Upon addition of the 50S ribosomal subunit IF-1, IF-2 and IF-3 are released leaving the mature 70S translation initiation complex. The sequence is that of Translation initiation factor IF-1 1 from Aromatoleum aromaticum (strain DSM 19018 / LMG 30748 / EbN1) (Azoarcus sp. (strain EbN1)).